Here is a 99-residue protein sequence, read N- to C-terminus: Nucleoid-associated protein EbfC (99 aa).

Belongs to the YbaB/EbfC family. As to quaternary structure, homodimer.

The protein resides in the cytoplasm. It is found in the nucleoid. Functionally, binds to DNA and alters its conformation. May be involved in regulation of gene expression, nucleoid organization and DNA protection. The sequence is that of Nucleoid-associated protein EbfC from Borrelia duttonii (strain Ly).